A 315-amino-acid chain; its full sequence is Protoheme IX farnesyltransferase (315 aa).

9 consecutive transmembrane segments (helical) span residues 21 to 41 (YFAL…LVGL), 52 to 74 (VGFC…NMWW), 98 to 118 (GEAL…LALA), 121 to 141 (LLAA…YSMW), 150 to 170 (IVIG…AATG), 177 to 197 (VLMF…LALF), 223 to 243 (ILVY…TPVA), 246 to 266 (LYLA…WDIW), and 284 to 304 (FFKF…AEAI).

This sequence belongs to the UbiA prenyltransferase family. Protoheme IX farnesyltransferase subfamily. As to quaternary structure, interacts with CtaA.

Its subcellular location is the cell inner membrane. It carries out the reaction heme b + (2E,6E)-farnesyl diphosphate + H2O = Fe(II)-heme o + diphosphate. The protein operates within porphyrin-containing compound metabolism; heme O biosynthesis; heme O from protoheme: step 1/1. Converts heme B (protoheme IX) to heme O by substitution of the vinyl group on carbon 2 of heme B porphyrin ring with a hydroxyethyl farnesyl side group. The chain is Protoheme IX farnesyltransferase from Dinoroseobacter shibae (strain DSM 16493 / NCIMB 14021 / DFL 12).